The following is a 327-amino-acid chain: Chlorophenol reductase (327 aa).

The N-terminal stretch at 1 to 24 (MKKTLGIILSISLAFSVLALPIFA) is a signal peptide. The LysM domain occupies 65-110 (TYYTVVSGDFFWQIAAKHGLTIDALAKLNPQIKNVNLIFPGQKILV).

It depends on cob(I)alamin as a cofactor.

It is found in the secreted. Its subcellular location is the cell wall. The protein localises to the cell membrane. Its activity is regulated as follows. Inhibited by sulfide and to a lesser extent by nitrite. Functionally, reductive dechlorination of ortho-chlorophenols. Dechlorinates in the ortho position with respect to the hydroxyl group. The protein is Chlorophenol reductase of Desulfitobacterium hafniense (Desulfitobacterium frappieri).